The chain runs to 116 residues: Outer membrane protein assembly factor BamE (116 aa).

The first 22 residues, 1 to 22 (MITMRCKMLTAAAVMLAMLTAG), serve as a signal peptide directing secretion. C23 carries the N-palmitoyl cysteine lipid modification. C23 carries S-diacylglycerol cysteine lipidation.

The protein belongs to the BamE family. As to quaternary structure, part of the Bam complex, which is composed of the outer membrane protein BamA, and four lipoproteins BamB, BamC, BamD and BamE.

The protein resides in the cell outer membrane. Functionally, part of the outer membrane protein assembly complex, which is involved in assembly and insertion of beta-barrel proteins into the outer membrane. The protein is Outer membrane protein assembly factor BamE of Yersinia pestis.